A 504-amino-acid chain; its full sequence is Cytochrome P450 2D9 (504 aa).

Phosphoserine is present on S249. Residue C446 coordinates heme.

The protein belongs to the cytochrome P450 family. Heme serves as cofactor.

It is found in the endoplasmic reticulum membrane. Its subcellular location is the microsome membrane. It catalyses the reaction an organic molecule + reduced [NADPH--hemoprotein reductase] + O2 = an alcohol + oxidized [NADPH--hemoprotein reductase] + H2O + H(+). In terms of biological role, cytochromes P450 are a group of heme-thiolate monooxygenases. In liver microsomes, this enzyme is involved in an NADPH-dependent electron transport pathway. It oxidizes a variety of structurally unrelated compounds, including steroids, fatty acids, and xenobiotics. This is Cytochrome P450 2D9 (Cyp2d9) from Mus musculus (Mouse).